A 291-amino-acid polypeptide reads, in one-letter code: ATP synthase subunit a (291 aa).

5 helical membrane-spanning segments follow: residues 48–68 (IHLD…LVFW), 108–128 (IAPL…MDLI), 161–181 (DPNI…FYSI), 241–261 (LIFI…SVPW), and 262–282 (AIFH…LTIV).

It belongs to the ATPase A chain family. F-type ATPases have 2 components, CF(1) - the catalytic core - and CF(0) - the membrane proton channel. CF(1) has five subunits: alpha(3), beta(3), gamma(1), delta(1), epsilon(1). CF(0) has three main subunits: a(1), b(2) and c(9-12). The alpha and beta chains form an alternating ring which encloses part of the gamma chain. CF(1) is attached to CF(0) by a central stalk formed by the gamma and epsilon chains, while a peripheral stalk is formed by the delta and b chains.

The protein localises to the cell inner membrane. Its function is as follows. Key component of the proton channel; it plays a direct role in the translocation of protons across the membrane. The protein is ATP synthase subunit a of Acinetobacter baylyi (strain ATCC 33305 / BD413 / ADP1).